The chain runs to 348 residues: Dihydroorotase (348 aa).

Residues His-17 and His-19 each contribute to the Zn(2+) site. Substrate is bound by residues 19-21 (HLR) and Asn-45. Lys-103, His-140, and His-178 together coordinate Zn(2+). Lys-103 carries the post-translational modification N6-carboxylysine. His-140 is a substrate binding site. A substrate-binding site is contributed by Leu-223. Asp-251 is a Zn(2+) binding site. The active site involves Asp-251. Residues His-255 and Ala-267 each contribute to the substrate site.

The protein belongs to the metallo-dependent hydrolases superfamily. DHOase family. Class II DHOase subfamily. In terms of assembly, homodimer. It depends on Zn(2+) as a cofactor.

It catalyses the reaction (S)-dihydroorotate + H2O = N-carbamoyl-L-aspartate + H(+). It functions in the pathway pyrimidine metabolism; UMP biosynthesis via de novo pathway; (S)-dihydroorotate from bicarbonate: step 3/3. Catalyzes the reversible cyclization of carbamoyl aspartate to dihydroorotate. The polypeptide is Dihydroorotase (Salmonella typhimurium (strain LT2 / SGSC1412 / ATCC 700720)).